The sequence spans 481 residues: Guanine nucleotide exchange factor C9orf72 homolog (481 aa).

The uDENN C9ORF72-type domain occupies 23-194; the sequence is SPLLAATFAY…ELLASMRSHS (172 aa). Positions 200–343 constitute a cDENN C9ORF72-type domain; that stretch reads DIADTVLNDD…SELTAFWRAT (144 aa). The region spanning 370–464 is the dDENN C9ORF72-type domain; the sequence is VLHRDTLVKA…IKPGLHSFIF (95 aa). The required for the homodimerization of the C9orf72-SMCR8 complex stretch occupies residues 461-481; sequence SFIFGRPFYTSVQERDVLMTF.

In terms of assembly, component of the C9orf72-SMCR8 complex, at least composed of C9orf72, SMCR8 and WDR41. The complex is formed of two protomers, each individually consisting of one molecule each of C9orf72, SMCR8 and WDR41. The protomers homodimerize via an interaction between C9orf72 (via C-terminus) and SMCR8 (via N-terminus). Within each protomer SMCR8 (via DENN domain) acts as a bridging protein between WDR41 (via C-terminus and N-terminus) and C9orf72 (via C-terminus). The C9orf72-SMCR8 complex associates with the ULK1/ATG1 kinase complex. Interacts with ULK1/ATG1 kinase complex members ULK1, ATG13 and RB1CC1. Interacts with SMCR8; the interaction is direct. Interacts with HNRNPA1, HNRNPA2B1 and UBQLN2. Interacts with small Rab GTPase RAB1A; the interaction mediates recruitment of RAB1A to the ULK1/ATG1 kinase complex. Also interacts with small Rab GTPase RAB7A. Interacts with cofilin. Interacts with GTP-binding proteins ARF1 and ARF6. Interacts with the DLG4/PSD-95. Interacts with CARM1 (via PH domain-like fold). Interacts with RAB39A and RAB39B (in GDP-bound forms); functions as GEF for RAB39A and RAB39B.

It is found in the nucleus. It localises to the cytoplasm. The protein resides in the P-body. Its subcellular location is the stress granule. The protein localises to the endosome. It is found in the lysosome. It localises to the cytoplasmic vesicle. The protein resides in the autophagosome. Its subcellular location is the autolysosome. The protein localises to the secreted. It is found in the cell projection. It localises to the axon. The protein resides in the growth cone. Its subcellular location is the perikaryon. Its function is as follows. Acts as a guanine-nucleotide releasing factor (GEF) for Rab GTPases by promoting the conversion of inactive RAB-GDP to the active form RAB-GTP. Acts as a GEF for RAB39A which enables HOPS-mediated autophagosome-lysosome membrane tethering and fusion in mammalian autophagy. Component of the C9orf72-SMCR8 complex where both subunits display GEF activity and that regulates autophagy. As part of the C9orf72-SMCR8-WDR41 (CSW) complex, functions as GEF for RAB8A and RAB39B, thereby promoting autophagosome maturation. As part of the C9orf72-SMCR8 complex, also functions as GTPase activating protein (GAP) for RAB8A and RAB11A in vitro. The C9orf72-SMCR8 complex also acts as a regulator of autophagy initiation by interacting with the ULK1/ATG1 kinase complex and modulating its protein kinase activity. Promotes initiation of autophagy by regulating the RAB1A-dependent trafficking of the ULK1/ATG1 kinase complex to the phagophore which leads to autophagosome formation. Acts as a regulator of mTORC1 signaling by promoting phosphorylation of mTORC1 substrates. Plays a role in endosomal trafficking. May be involved in regulating the maturation of phagosomes to lysosomes. Promotes the lysosomal localization and lysosome-mediated degradation of CARM1 which leads to inhibition of starvation-induced lipid metabolism. Regulates actin dynamics in motor neurons by inhibiting the GTP-binding activity of ARF6, leading to ARF6 inactivation. This reduces the activity of the LIMK1 and LIMK2 kinases which are responsible for phosphorylation and inactivation of cofilin, leading to CFL1/cofilin activation. Positively regulates axon extension and axon growth cone size in spinal motor neurons. Required for SMCR8 protein expression and localization at pre- and post-synaptic compartments in the forebrain, also regulates protein abundance of RAB3A and GRIA1/GLUR1 in post-synaptic compartments in the forebrain and hippocampus. Plays a role within the hematopoietic system in restricting inflammation and the development of autoimmunity. This is Guanine nucleotide exchange factor C9orf72 homolog from Rattus norvegicus (Rat).